A 356-amino-acid polypeptide reads, in one-letter code: tRNA-specific 2-thiouridylase MnmA (356 aa).

6–13 contacts ATP; that stretch reads AVSGGTDS. Cys-95 serves as the catalytic Nucleophile. An intrachain disulfide couples Cys-95 to Cys-195. Gly-119 is a binding site for ATP. The segment at 145–147 is interaction with tRNA; sequence KDQ. Residue Cys-195 is the Cysteine persulfide intermediate of the active site. Residues 300–301 are interaction with tRNA; sequence RY.

Belongs to the MnmA/TRMU family.

It localises to the cytoplasm. The enzyme catalyses S-sulfanyl-L-cysteinyl-[protein] + uridine(34) in tRNA + AH2 + ATP = 2-thiouridine(34) in tRNA + L-cysteinyl-[protein] + A + AMP + diphosphate + H(+). Its function is as follows. Catalyzes the 2-thiolation of uridine at the wobble position (U34) of tRNA, leading to the formation of s(2)U34. The sequence is that of tRNA-specific 2-thiouridylase MnmA from Oleidesulfovibrio alaskensis (strain ATCC BAA-1058 / DSM 17464 / G20) (Desulfovibrio alaskensis).